The primary structure comprises 638 residues: MTPSTIQTASPFRLASAGEISEVQGILRTAGLLGPEKRIAYLGVLDPARGAGSEAEDRRFRVFIHDVSGARPQEVTVSVTNGTVISAVELDTAATGELPVLEEEFEVVEQLLATDERWLKALAARNLDVSKVRVAPLSAGVFEYAEERGRRILRGLAFVQDFPEDSAWAHPVDGLVAYVDVVSKEVTRVIDTGVFPVPAEHGNYTDPELTGPLRTTQKPISITQPEGPSFTVTGGNHIEWEKWSLDVGFDVREGVVLHNIAFRDGDRLRPIINRASIAEMVVPYGDPSPIRSWQNYFDTGEYLVGQYANSLELGCDCLGDITYLSPVISDAFGNPREIRNGICMHEEDWGILAKHSDLWSGINYTRRNRRMVISFFTTIGNYDYGFYWYLYLDGTIEFEAKATGVVFTSAFPEGGSDNISQLAPGLGAPFHQHIFSARLDMAIDGFTNRVEEEDVVRQTMGPGNERGNAFSRKRTVLTRESEAVREADARTGRTWIISNPESKNRLNEPVGYKLHAHNQPTLLADPGSSIARRAAFATKDLWVTRYADDERYPTGDFVNQHSGGAGLPSYIAQDRDIDGQDIVVWHTFGLTHFPRVEDWPIMPVDTVGFKLRPEGFFDRSPVLDVPANPSQSGSHCHG.

Residues 1 to 2 constitute a propeptide that is removed on maturation; it reads MT. 296–307 contributes to the substrate binding site; the sequence is YFDTGEYLVGQY. Catalysis depends on Asp298, which acts as the Proton acceptor. A disulfide bridge connects residues Cys317 and Cys343. 379-384 lines the substrate pocket; the sequence is IGNYDY. Residue Tyr382 is the Schiff-base intermediate with substrate; via topaquinone of the active site. Tyr382 is modified (2',4',5'-topaquinone). Positions 431, 433, and 592 each coordinate Cu cation.

It belongs to the copper/topaquinone oxidase family. As to quaternary structure, homodimer. The cofactor is Cu cation. L-topaquinone is required as a cofactor. Topaquinone (TPQ) is generated by copper-dependent autoxidation of a specific tyrosyl residue.

It carries out the reaction a primary methyl amine + O2 + H2O = an aldehyde + H2O2 + NH4(+). It catalyses the reaction 2-phenylethylamine + O2 + H2O = 2-phenylacetaldehyde + H2O2 + NH4(+). Its function is as follows. Catalyzes the oxidative deamination of phenylethylamine to phenylacetaldehyde with the concomitant production of hydrogen peroxide and ammonia. The protein is Phenylethylamine oxidase of Arthrobacter globiformis.